Reading from the N-terminus, the 172-residue chain is Translation initiation factor IF-3 (172 aa).

It belongs to the IF-3 family. In terms of assembly, monomer.

Its subcellular location is the cytoplasm. In terms of biological role, IF-3 binds to the 30S ribosomal subunit and shifts the equilibrium between 70S ribosomes and their 50S and 30S subunits in favor of the free subunits, thus enhancing the availability of 30S subunits on which protein synthesis initiation begins. The chain is Translation initiation factor IF-3 from Geobacillus stearothermophilus (Bacillus stearothermophilus).